Here is a 136-residue protein sequence, read N- to C-terminus: MRFALAITTLIAAVTAAPSGHHGGKDLHKMTLGQAGDRCGADQSIYCCNEKTTKIEHSSPETGLGGLLGATVGADGLLSHLLGTCTKIPVNVLAVGNLLQSECTNRAACCHNTPSVAYGGLVNLALPCVAIGSLIQ.

An N-terminal signal peptide occupies residues M1–A16. 4 disulfides stabilise this stretch: C39–C109, C47–C103, C48–C85, and C110–C128.

Belongs to the fungal hydrophobin family. In terms of tissue distribution, expressed in aerial conidia, in vitro blastospores, submerged conidia, and cells sporulating on chitin and insect cuticle, with hyd1 expression peaking in growing mycelia.

The protein localises to the secreted. It localises to the cell wall. Its subcellular location is the spore coat. The protein resides in the vacuole. It is found in the cytoplasmic vesicle. Functionally, aerial growth, conidiation, and dispersal of filamentous fungi in the environment rely upon a capability of their secreting small amphipathic proteins called hydrophobins (HPBs) with low sequence identity. Class I can self-assemble into an outermost layer of rodlet bundles on aerial cell surfaces, conferring cellular hydrophobicity that supports fungal growth, development and dispersal; whereas Class II form highly ordered films at water-air interfaces through intermolecular interactions but contribute nothing to the rodlet structure. Hyd1A contributes to certain cell wall-related features, such as hydrophobicity but is not involved in cell wall-related events during fungal proliferation in host hemocoel. Hyd1A and hyd1B coregulate the formation, morphology and orderly assembly of rodlet bundles required for conidial hydrophobicity and infectivity. Contributes to the spore coat rodlet layer. The protein is Class I hydrophobin A of Beauveria bassiana (strain ARSEF 2860) (White muscardine disease fungus).